Reading from the N-terminus, the 570-residue chain is Sulfite reductase [NADPH] hemoprotein beta-component (570 aa).

Residues Cys-434, Cys-440, Cys-479, and Cys-483 each contribute to the [4Fe-4S] cluster site. A siroheme-binding site is contributed by Cys-483.

Belongs to the nitrite and sulfite reductase 4Fe-4S domain family. In terms of assembly, alpha(8)-beta(8). The alpha component is a flavoprotein, the beta component is a hemoprotein. The cofactor is siroheme. Requires [4Fe-4S] cluster as cofactor.

It carries out the reaction hydrogen sulfide + 3 NADP(+) + 3 H2O = sulfite + 3 NADPH + 4 H(+). It participates in sulfur metabolism; hydrogen sulfide biosynthesis; hydrogen sulfide from sulfite (NADPH route): step 1/1. Its function is as follows. Component of the sulfite reductase complex that catalyzes the 6-electron reduction of sulfite to sulfide. This is one of several activities required for the biosynthesis of L-cysteine from sulfate. The chain is Sulfite reductase [NADPH] hemoprotein beta-component (cysI) from Salmonella typhimurium (strain LT2 / SGSC1412 / ATCC 700720).